The sequence spans 191 residues: Protein GrpE (191 aa).

Belongs to the GrpE family. Homodimer.

The protein resides in the cytoplasm. Functionally, participates actively in the response to hyperosmotic and heat shock by preventing the aggregation of stress-denatured proteins, in association with DnaK and GrpE. It is the nucleotide exchange factor for DnaK and may function as a thermosensor. Unfolded proteins bind initially to DnaJ; upon interaction with the DnaJ-bound protein, DnaK hydrolyzes its bound ATP, resulting in the formation of a stable complex. GrpE releases ADP from DnaK; ATP binding to DnaK triggers the release of the substrate protein, thus completing the reaction cycle. Several rounds of ATP-dependent interactions between DnaJ, DnaK and GrpE are required for fully efficient folding. This is Protein GrpE from Helicobacter pylori (strain P12).